The chain runs to 289 residues: D-psicose 3-epimerase (289 aa).

Positions 6 and 107 each coordinate substrate. The Proton donor/acceptor role is filled by Glu-150. Residue Glu-150 participates in Mn(2+) binding. Substrate is bound by residues Glu-156 and 183 to 186; that span reads DTFH. 2 residues coordinate Mn(2+): Asp-183 and His-209. Arg-215 is a substrate binding site. The Proton donor/acceptor role is filled by Glu-244. Mn(2+) is bound at residue Glu-244.

This sequence belongs to the hyi family. Homotetramer. It depends on Mn(2+) as a cofactor. The cofactor is Co(2+).

The enzyme catalyses D-allulose = keto-D-fructose. Its activity is regulated as follows. Inhibited by Zn(2+) and Cu(2+). Involved in the biosynthesis of D-psicose. Catalyzes the reversible epimerization of D-fructose at the C3 position to yield D-psicose. The enzyme is highly specific for D-psicose and shows very low activity with D-tagatose. The substrate specificity decreases in the following order: D-fructose, D-tagatose, D-ribulose, D-xylulose, and D-sorbose. It shows a higher level of activity for cis ketoses than for trans-ketoses. The polypeptide is D-psicose 3-epimerase (dpe) (Agrobacterium fabrum (strain C58 / ATCC 33970) (Agrobacterium tumefaciens (strain C58))).